Here is a 192-residue protein sequence, read N- to C-terminus: ADP-ribosylation factor-like protein 14 (192 aa).

Glycine 2 carries N-myristoyl glycine lipidation. GTP is bound by residues 20 to 27 (GLDSAGKS), 64 to 68 (DVGGQ), and 124 to 127 (NKQD).

Belongs to the small GTPase superfamily. Arf family. Interacts with ARL14EP.

The protein resides in the cytoplasmic vesicle. Functionally, GTPase that recruits MYO1E to MHC class II-containing vesicles via the effector protein ARL14EP and hence controls the movement of these vesicles along the actin cytoskeleton in dendritic cells. This chain is ADP-ribosylation factor-like protein 14 (Arl14), found in Mus musculus (Mouse).